A 323-amino-acid polypeptide reads, in one-letter code: NADH-cytochrome b5 reductase 2 (323 aa).

Residues 32–48 (LAPIYLGVGLIGLGVGL) traverse the membrane as a helical segment. An FAD-binding FR-type domain is found at 72–177 (QGWVDLKLAQ…KGPIPKYPWE (106 aa)). FAD is bound at residue 180–215 (KHKHICLIAGGTGITPMYQLARKIFKDPEDQTKVTL).

The protein belongs to the flavoprotein pyridine nucleotide cytochrome reductase family. FAD serves as cofactor.

The protein resides in the mitochondrion outer membrane. The catalysed reaction is 2 Fe(III)-[cytochrome b5] + NADH = 2 Fe(II)-[cytochrome b5] + NAD(+) + H(+). May mediate the reduction of outer membrane cytochrome b5. This chain is NADH-cytochrome b5 reductase 2 (mcr1), found in Aspergillus fumigatus (strain ATCC MYA-4609 / CBS 101355 / FGSC A1100 / Af293) (Neosartorya fumigata).